A 449-amino-acid chain; its full sequence is Hyaluronidase-2 (449 aa).

A signal peptide spans 1–23; sequence MYHLWIKCLAAWIFLKRCNGVHA. 2 disulfides stabilise this stretch: cysteine 47/cysteine 340 and cysteine 211/cysteine 227. Asparagine 67, asparagine 103, and asparagine 111 each carry an N-linked (GlcNAc...) asparagine glycan. The active-site Proton donor is glutamate 135. Asparagine 153 is a glycosylation site (N-linked (GlcNAc...) asparagine). A glycan (N-linked (GlcNAc...) asparagine) is linked at asparagine 357. 3 disulfides stabilise this stretch: cysteine 365-cysteine 376, cysteine 370-cysteine 427, and cysteine 429-cysteine 438. Asparagine 401 is a glycosylation site (N-linked (GlcNAc...) asparagine). The EGF-like domain occupies 427–438; sequence CQCYQGWKGLYC.

It belongs to the glycosyl hydrolase 56 family. As to quaternary structure, monomer. As to expression, expressed by the venom gland.

Its subcellular location is the secreted. The enzyme catalyses Random hydrolysis of (1-&gt;4)-linkages between N-acetyl-beta-D-glucosamine and D-glucuronate residues in hyaluronate.. Functionally, snake venom endo-hyaluronidase that degrades hyaluronan to smaller oligosaccharide fragments. In venom, it is not toxic by itself, but increases the diffusion of other venom proteins by degrading the extracellular matrix. In addition, it displays antiedematogenic activity. The protein is Hyaluronidase-2 of Bitis arietans (African puff adder).